We begin with the raw amino-acid sequence, 1291 residues long: DNA-directed RNA polymerase subunit beta' (1291 aa).

Zn(2+)-binding residues include cysteine 60, cysteine 62, cysteine 75, and cysteine 78. Residues aspartate 535, aspartate 537, and aspartate 539 each contribute to the Mg(2+) site. Zn(2+)-binding residues include cysteine 874, cysteine 951, cysteine 958, and cysteine 961.

Belongs to the RNA polymerase beta' chain family. As to quaternary structure, the RNAP catalytic core consists of 2 alpha, 1 beta, 1 beta' and 1 omega subunit. When a sigma factor is associated with the core the holoenzyme is formed, which can initiate transcription. Mg(2+) is required as a cofactor. It depends on Zn(2+) as a cofactor.

The enzyme catalyses RNA(n) + a ribonucleoside 5'-triphosphate = RNA(n+1) + diphosphate. Functionally, DNA-dependent RNA polymerase catalyzes the transcription of DNA into RNA using the four ribonucleoside triphosphates as substrates. This Leifsonia xyli subsp. xyli (strain CTCB07) protein is DNA-directed RNA polymerase subunit beta'.